Consider the following 449-residue polypeptide: UDP-N-acetylglucosamine 1-carboxyvinyltransferase (449 aa).

Residue 51-52 (KN) participates in phosphoenolpyruvate binding. UDP-N-acetyl-alpha-D-glucosamine is bound at residue Arg-121. The active-site Proton donor is the Cys-145. Cys-145 is modified (2-(S-cysteinyl)pyruvic acid O-phosphothioketal). UDP-N-acetyl-alpha-D-glucosamine-binding positions include 150–154 (RPVDQ), Asp-333, and Ile-355.

Belongs to the EPSP synthase family. MurA subfamily.

The protein resides in the cytoplasm. It carries out the reaction phosphoenolpyruvate + UDP-N-acetyl-alpha-D-glucosamine = UDP-N-acetyl-3-O-(1-carboxyvinyl)-alpha-D-glucosamine + phosphate. The protein operates within cell wall biogenesis; peptidoglycan biosynthesis. Cell wall formation. Adds enolpyruvyl to UDP-N-acetylglucosamine. In Burkholderia lata (strain ATCC 17760 / DSM 23089 / LMG 22485 / NCIMB 9086 / R18194 / 383), this protein is UDP-N-acetylglucosamine 1-carboxyvinyltransferase.